The chain runs to 162 residues: UPF0763 protein Sdel_0383 (162 aa).

This sequence belongs to the UPF0763 family.

The sequence is that of UPF0763 protein Sdel_0383 from Sulfurospirillum deleyianum (strain ATCC 51133 / DSM 6946 / 5175).